The primary structure comprises 248 residues: Putative transposase YncI (248 aa).

The protein belongs to the transposase 11 family.

The polypeptide is Putative transposase YncI (yncI) (Escherichia coli (strain K12)).